The primary structure comprises 176 residues: DNA-directed RNA polymerase II subunit 7 (176 aa).

It belongs to the eukaryotic RPB7/RPC8 RNA polymerase subunit family. As to quaternary structure, component of the RNA polymerase II complex consisting of at least 12 subunits. Interacts with NRPB4.

The protein localises to the nucleus. Its function is as follows. DNA-dependent RNA polymerase catalyzes the transcription of DNA into RNA using the four ribonucleoside triphosphates as substrates. Component of RNA polymerase II which synthesizes mRNA precursors and many functional non-coding RNAs. Pol II is the central component of the basal RNA polymerase II transcription machinery. It is composed of mobile elements that move relative to each other. NRPB7 is part of a subcomplex with NRPB4 that binds to a pocket formed by NRPB1, NRPB2 and NRPB6 at the base of the clamp element. The NRBP4-NRPB7 subcomplex seems to lock the clamp via NRPB7 in the closed conformation thus preventing double-stranded DNA to enter the active site cleft. The NRPB4-NRPB7 subcomplex binds single-stranded DNA and RNA. The polypeptide is DNA-directed RNA polymerase II subunit 7 (NRPB7) (Arabidopsis thaliana (Mouse-ear cress)).